The sequence spans 396 residues: MMMMSGRPSGGAGGGRYPFTASQWQELEHQALIYKYMASGTPIPSDLILPLRRSFLLDSALATSPSLAFPPQPSLGWGCFGMGFGRKAEDPEPGRCRRTDGKKWRCSKEAYPDSKYCEKHMHRGKNRSRKPVEMSLATPPPPSSSATSAASNSSAGVAPTTTTTSSPAPSYSRPAPHDAAPYQALYGGPYAAATARTPAAAAYHAQVSPFHLHIDTTHPHPPPSYYSMDHKEYAYGHATKEVHGEHAFFSDGTEREHHHAAAGHGQWQFKQLGMEPKQSTTPLFPGAGYGHTAASPYAIDLSKEDDDEKERRQQQQQQQQHCFLLGADLRLEKPAGHDHAAAAQKPLRHFFDEWPHEKNSKGSWMGLEGETQLSMSIPMAANDLPITTTSRYHNDE.

Residues 18–53 (PFTASQWQELEHQALIYKYMASGTPIPSDLILPLRR) form the QLQ domain. 2 short sequence motifs (bipartite nuclear localization signal) span residues 86-105 (RKAEDPEPGRCRRTDGKKWR) and 123-130 (RGKNRSRK). In terms of domain architecture, WRC spans 90–134 (DPEPGRCRRTDGKKWRCSKEAYPDSKYCEKHMHRGKNRSRKPVEM). Residues 117–176 (CEKHMHRGKNRSRKPVEMSLATPPPPSSSATSAASNSSAGVAPTTTTTSSPAPSYSRPAP) are disordered. The span at 120–129 (HMHRGKNRSR) shows a compositional bias: basic residues. Residues 144–174 (SSATSAASNSSAGVAPTTTTTSSPAPSYSRP) are compositionally biased toward low complexity.

This sequence belongs to the GRF family. As to expression, highly expressed in the intercalary meristem of the internode and in the shoot apex. Detected in the leaf primordia and emerging leaves in the uppermost node. Preferentially localized in the epidermis and in the tissues surrounding vascular bundles of the intercalary meristem of the internode and in adventitious roots of the second highest node. Low expression in the coleoptile and in the youngest leaf.

The protein localises to the nucleus. Transcription activator that plays a regulatory role in gibberellin-induced stem elongation. The protein is Growth-regulating factor 1 (GRF1) of Oryza sativa subsp. indica (Rice).